The chain runs to 269 residues: Fructose permease IIC component (269 aa).

The PTS EIIC type-4 domain occupies 1–234; it reads MSSLQIILLL…GALGLCLALL (234 aa). 7 consecutive transmembrane segments (helical) span residues 2-22, 35-54, 64-86, 90-110, 149-169, 181-201, and 206-226; these read SSLQ…ASVL, TLVG…GGTL, VGLA…VITA, IGEG…LTIF, VMIP…AFLG, IGGG…MNIP, and FFYI…GFGA.

The protein localises to the cell membrane. Its function is as follows. The phosphoenolpyruvate-dependent sugar phosphotransferase system (PTS), a major carbohydrate active -transport system, catalyzes the phosphorylation of incoming sugar substrates concomitant with their translocation across the cell membrane. This system is involved in fructose transport. This Bacillus subtilis (strain 168) protein is Fructose permease IIC component (levF).